A 485-amino-acid polypeptide reads, in one-letter code: Sodium-coupled neutral amino acid symporter 1 (485 aa).

The Cytoplasmic portion of the chain corresponds to 1–74 (MMHFKSGLEL…EYIPGTTSLG (74 aa)). Phosphoserine is present on S6. T11 carries the post-translational modification Phosphothreonine. A phosphoserine mark is found at S25, S28, S49, and S52. T54 is subject to Phosphothreonine. At S56 the chain carries Phosphoserine. A helical membrane pass occupies residues 75-97 (MSVFNLSNAIMGSGILGLAFALA). Topologically, residues 98–112 (NTGILLFLILLTSVT) are extracellular. The chain crosses the membrane as a helical span at residues 113-133 (LLSIYSINLLLICSKETGCMV). Over 134–148 (YEKLGEQVFGTTGKL) the chain is Cytoplasmic. Residues 149 to 169 (VIFGATSLQNTGAMLSYLFIV) traverse the membrane as a helical segment. The Extracellular segment spans residues 170–188 (KNELPSAIKSLMGEEETFS). A helical membrane pass occupies residues 189–211 (AWYVDGRVLVVMVTFGIILPLCL). Residues 212–216 (LKNLG) lie on the Cytoplasmic side of the membrane. The chain crosses the membrane as a helical span at residues 217 to 237 (YLGYTSGFSLSCMVFFLIVVI). Residues 238-273 (YKKFQIPCMNGEQNSTVSANVTDACTPKYVTFNSKT) are Extracellular-facing. A disulfide bridge connects residues C245 and C262. N251 and N257 each carry an N-linked (GlcNAc...) asparagine glycan. A helical transmembrane segment spans residues 274–294 (VYALPTIAFAFVCHPSVLPIY). Topologically, residues 295–310 (SELKDRSQKKMQMVSN) are cytoplasmic. Residues 311 to 331 (ISFFAMFVMYFLTAIFGYLTF) form a helical membrane-spanning segment. At 332 to 348 (YEKVQSDLLHKYQSTGD) the chain is on the extracellular side. The chain crosses the membrane as a helical span at residues 349 to 369 (ILILTVRLAVIVAVILTVPVL). Topologically, residues 370–391 (FFTVRSSLFELAKKTKFHLCRH) are cytoplasmic. The chain crosses the membrane as a helical span at residues 392-412 (VLVTIILLVIINLLVIFIPSM). Residues 413–414 (KD) are Extracellular-facing. A helical membrane pass occupies residues 415 to 435 (IFGVVGVTSANMLIFILPSSL). Residues 436 to 450 (YLKITNQDGDKNTQR) are Cytoplasmic-facing. The chain crosses the membrane as a helical span at residues 451 to 471 (IWAALFLALGVLFSLISIPLV). Over 472–485 (IYDWACSSSNGEGH) the chain is Extracellular.

This sequence belongs to the amino acid/polyamine transporter 2 family. Post-translationally, N-glycosylation plays an important role in the L-glutamine transport. In terms of tissue distribution, specifically expressed in brain with the highest levels in cerebellum and thalamus (at protein level). Expressed in glutamatergic, GABAergic and a subset of dopaminergic neurons of the substantia nigra and cholinergic motoneurons (at protein level). Also expressed by ependymal cells lining the ventricle (at protein level). Expression is also detected in spinal cord, heart, colon and placenta.

It localises to the cell membrane. It catalyses the reaction L-glutamine(in) + Na(+)(in) = L-glutamine(out) + Na(+)(out). It carries out the reaction L-alanine(in) + Na(+)(in) = L-alanine(out) + Na(+)(out). The enzyme catalyses L-asparagine(in) + Na(+)(in) = L-asparagine(out) + Na(+)(out). The catalysed reaction is L-histidine(in) + Na(+)(in) = L-histidine(out) + Na(+)(out). It catalyses the reaction L-serine(in) + Na(+)(in) = L-serine(out) + Na(+)(out). It carries out the reaction L-cysteine(in) + Na(+)(in) = L-cysteine(out) + Na(+)(out). The enzyme catalyses L-methionine(in) + Na(+)(in) = L-methionine(out) + Na(+)(out). The catalysed reaction is glycine(in) + Na(+)(in) = glycine(out) + Na(+)(out). It catalyses the reaction L-threonine(in) + Na(+)(in) = L-threonine(out) + Na(+)(out). It carries out the reaction L-proline(in) + Na(+)(in) = L-proline(out) + Na(+)(out). With respect to regulation, inhibited by alpha-(methylamino)isobutyric acid (MeAIB). Inhibited by lithium, potassium, choline ions, N-methylglucamine. The pH dependence has an allosteric effect on the transport. Functionally, symporter that cotransports short-chain neutral amino acids and sodium ions from the extraccellular to the intracellular side of the cell membrane. The transport is elctrogenic, pH dependent and driven by the Na(+) electrochemical gradient. Participates in the astroglia-derived glutamine transport into GABAergic interneurons for neurotransmitter GABA de novo synthesis. May also contributes to amino acid transport in placental trophoblast. Regulates synaptic plasticity. The sequence is that of Sodium-coupled neutral amino acid symporter 1 from Rattus norvegicus (Rat).